A 260-amino-acid chain; its full sequence is MNNLNDPPNWNIQPNPRADGGDGSKWNYALLVPMLGLAAFRWIWSRESQKEIEKARRAYHQQTAAFQQDLDAKYHAVISEHRRAVAQLSLELEKEQNRTTSFREALISQGRKLAEEKKLLEQERAQIIQEKSQRQPLRRAYLSCLEEEDEWQRRAQLVLKEVGEALEERQNIYCSLILPRSARQQLEKSLLVRTSADPVAADLEMATGLSDIFKHDKHCGDVWNTNKRQNGKLMWMYLKYWELLVELKKFKKIEKVILGK.

Residues 47–135 adopt a coiled-coil conformation; it reads ESQKEIEKAR…QIIQEKSQRQ (89 aa).

This Rattus norvegicus (Rat) protein is Coiled-coil domain-containing protein 127 (Ccdc127).